The chain runs to 477 residues: MVRISTSISYLWGMVASLFLMMPAYSADAPVSSPPAPIEARNSVFTAQHPDQFNSWKATSEQSERHDALAEDPYMVILWAGYPFSRDYNKPRGHAYAITDVRETLRTGAPKTAEDGPLPMACWSCKSPDVARLIQQEGEDGYFKGKWARGGPEITNDLGCADCHDTASPDFAQGKPALTLSRPYAERAMEAIGKPFDQASRFGQQSMVCGQCHVEYYFSGKDKAVKFPWDNGTKVEDMEKYYDAISFSDWTNTLSRAPMLKAQHPEYETWSVGIHGKNNVTCIDCHMPKVKNADGKLYTDHKIGNPFDNYGETCTNCHTQDKAAMQAVVAERKTAIHELKLKAEEQLVHAHFEAKAAWDAGATEAEMQPILMDIRHAQWRWDLAVASHGIHMHAPDEGLRMLGTSLSKSAEARTKLVRLLAQKGVTGEVKLPDISTKEKAQQAIGLNMQQIKAEKQDFLNTVVPQWDEQARKAGRLN.

The signal sequence occupies residues 1-26 (MVRISTSISYLWGMVASLFLMMPAYS). A heme c-binding site is contributed by histidine 94. Residues cysteine 122, cysteine 125, and lysine 126 each coordinate heme. Cysteine 160, cysteine 163, histidine 164, cysteine 209, cysteine 212, and histidine 213 together coordinate heme c. Ca(2+)-binding residues include glutamate 215, tyrosine 216, lysine 261, and glutamine 263. Tyrosine 216 serves as a coordination point for substrate. Residue histidine 264 coordinates substrate. Heme c is bound by residues histidine 275, cysteine 282, cysteine 285, histidine 286, histidine 301, cysteine 314, cysteine 317, histidine 318, and histidine 393.

The protein belongs to the cytochrome c-552 family. Ca(2+) is required as a cofactor. It depends on heme c as a cofactor.

It localises to the periplasm. The enzyme catalyses 6 Fe(III)-[cytochrome c] + NH4(+) + 2 H2O = 6 Fe(II)-[cytochrome c] + nitrite + 8 H(+). The protein operates within nitrogen metabolism; nitrate reduction (assimilation). In terms of biological role, catalyzes the reduction of nitrite to ammonia, consuming six electrons in the process. This chain is Cytochrome c-552, found in Pectobacterium carotovorum subsp. carotovorum (strain PC1).